A 968-amino-acid chain; its full sequence is MPGILDRVLRIGEGKILRKLNKLKDQINSIEDDFVDLSDAELRALTDEYKQRLKDGEELDDLLPEAFATVREAAKRTLGQRHFDVQLMGGAALHFGNIAEMKTGEGKTLTATLPVYLNALTGKGVHVVTVNDYLARRDAETMGRIYRFLGMEVGVISPEMSPAARRKAYQADITYGTNNEFGFDYLRDNMARSLDNCVQRGHHYAIVDEVDSILIDEARTPLIISGPAEQNSRWYVEFAKIAPRLRRDVDYEVDEKKRTVGITEAGVAKVEDWLGIDNLYESVNTPLISFLHNAIKAKELYRRDRDYIVKDGEVLIVDEFTGRILRGRRYNEGMHQAIEAKEKVKIKEENQTLAKITLQNYFRLYEKLAGMTGTAVTEAAEFQQTYNLGVVPIPTNKPMIREDLRDLVYKTEEAKFQAIVEDIAECHERGQPVLVGTTSVEKSELLSKMLKRRGIPHEVLNAKNHAREAAIVARAGKLGAVTVATNMAGRGTDIMLGGNPDFIAAEELQERGLSPLETPEEYEKAWPEALERAKKEVEAEHQKVVELGGLYVLGTERHESRRIDNQLRGRAGRQGDPGKSRFYLSLGDDLMRLFNGERVQMIMNRLNLPDDQPIEHKMVTKAIQSAQGQLEQQNFEIRKNVLKYDEVLNRQRQVIYAERRKVLEGADLREQVRSMIDDVLDSYVRSATAEGDPEDWDLEHLWTAFSQIFPVSFTADQLIEENGGDISVLTPDIISQRVREDAHEVYDRREAEIGEETMREVERQVILQVMDRKWREHLYEMDYLQEGIGLRAMAQRNPLIEYQREGYDMFQEMLEGIKEESIRFLFNVEVRVNQPQESQITAASAAATASAIPLVAPEAEKTEDKAEDAQEAEESAASAEAAESAKDTAQDKDAESVAKKAQAVVPALGKEEKQPEKLQYSGPSEGGGVEKRTEDTGPDYANTPRNAPCPCGSGKKYKKCHGAPKSRV.

ATP-binding positions include Gln-86, 104-108 (GEGKT), and Asp-493. Composition is skewed to basic and acidic residues over residues 858-868 (EAEKTEDKAED) and 883-898 (ESAK…ESVA). The tract at residues 858–968 (EAEKTEDKAE…KCHGAPKSRV (111 aa)) is disordered. Zn(2+)-binding residues include Cys-949, Cys-951, Cys-960, and His-961. Residues 955 to 968 (KKYKKCHGAPKSRV) show a composition bias toward basic residues.

Belongs to the SecA family. In terms of assembly, monomer and homodimer. Part of the essential Sec protein translocation apparatus which comprises SecA, SecYEG and auxiliary proteins SecDF. Other proteins may also be involved. Zn(2+) is required as a cofactor.

The protein resides in the cell membrane. Its subcellular location is the cytoplasm. The enzyme catalyses ATP + H2O + cellular proteinSide 1 = ADP + phosphate + cellular proteinSide 2.. Functionally, part of the Sec protein translocase complex. Interacts with the SecYEG preprotein conducting channel. Has a central role in coupling the hydrolysis of ATP to the transfer of proteins into and across the cell membrane, serving as an ATP-driven molecular motor driving the stepwise translocation of polypeptide chains across the membrane. The protein is Protein translocase subunit SecA 1 of Thermobifida fusca (strain YX).